The primary structure comprises 75 residues: UPF0291 protein LMOf2365_1322 (75 aa).

Residues 56–75 (DPNGTDVTPHKVKQLRKNKH) are disordered. Positions 65-75 (HKVKQLRKNKH) are enriched in basic residues.

Belongs to the UPF0291 family.

It localises to the cytoplasm. In Listeria monocytogenes serotype 4b (strain F2365), this protein is UPF0291 protein LMOf2365_1322.